The primary structure comprises 106 residues: Large ribosomal subunit protein uL24 (106 aa).

The protein belongs to the universal ribosomal protein uL24 family. Part of the 50S ribosomal subunit.

Its function is as follows. One of two assembly initiator proteins, it binds directly to the 5'-end of the 23S rRNA, where it nucleates assembly of the 50S subunit. In terms of biological role, one of the proteins that surrounds the polypeptide exit tunnel on the outside of the subunit. The polypeptide is Large ribosomal subunit protein uL24 (Paracidovorax citrulli (strain AAC00-1) (Acidovorax citrulli)).